Reading from the N-terminus, the 337-residue chain is Putative long-chain-alcohol O-fatty-acyltransferase 10 (337 aa).

The next 8 membrane-spanning stretches (helical) occupy residues 7–27 (SFVK…YIPS), 38–58 (SVLP…FTIF), 59–79 (SSTT…LFAF), 82–102 (GPLL…CLPI), 142–162 (ILLL…LLTI), 228–248 (MGCM…YFYI), 254–274 (TLEV…EIAV), and 285–305 (MLLR…LFFG).

Belongs to the wax synthase family.

The protein resides in the membrane. It carries out the reaction a long chain fatty alcohol + a fatty acyl-CoA = a wax ester + CoA. Its function is as follows. Catalyzes the final step in the synthesis of long-chain linear esters (waxes). The chain is Putative long-chain-alcohol O-fatty-acyltransferase 10 from Arabidopsis thaliana (Mouse-ear cress).